The following is a 196-amino-acid chain: Dephospho-CoA kinase (196 aa).

The 191-residue stretch at 6 to 196 folds into the DPCK domain; that stretch reads AIALTGGIGT…QVERFLKTLL (191 aa). An ATP-binding site is contributed by 14–19; it reads GTGKST.

The protein belongs to the CoaE family.

The protein resides in the cytoplasm. It carries out the reaction 3'-dephospho-CoA + ATP = ADP + CoA + H(+). Its pathway is cofactor biosynthesis; coenzyme A biosynthesis; CoA from (R)-pantothenate: step 5/5. Its function is as follows. Catalyzes the phosphorylation of the 3'-hydroxyl group of dephosphocoenzyme A to form coenzyme A. This is Dephospho-CoA kinase from Helicobacter pylori (strain J99 / ATCC 700824) (Campylobacter pylori J99).